Reading from the N-terminus, the 329-residue chain is Malate dehydrogenase (329 aa).

Position 12–18 (12–18 (GAAGQIG)) interacts with NAD(+). Substrate is bound by residues arginine 93 and arginine 99. NAD(+)-binding positions include asparagine 106, glutamine 113, and 130 to 132 (TGN). Substrate contacts are provided by asparagine 132 and arginine 163. Histidine 188 acts as the Proton acceptor in catalysis.

It belongs to the LDH/MDH superfamily. MDH type 2 family.

It carries out the reaction (S)-malate + NAD(+) = oxaloacetate + NADH + H(+). In terms of biological role, catalyzes the reversible oxidation of malate to oxaloacetate. The protein is Malate dehydrogenase of Mycolicibacterium paratuberculosis (strain ATCC BAA-968 / K-10) (Mycobacterium paratuberculosis).